Reading from the N-terminus, the 24-residue chain is Coenzyme PQQ synthesis protein A (24 aa).

The pyrroloquinoline quinone (Glu-Tyr) cross-link spans 16 to 20 (EVTMY).

It belongs to the PqqA family.

Its pathway is cofactor biosynthesis; pyrroloquinoline quinone biosynthesis. In terms of biological role, required for coenzyme pyrroloquinoline quinone (PQQ) biosynthesis. PQQ is probably formed by cross-linking a specific glutamate to a specific tyrosine residue and excising these residues from the peptide. In Pseudomonas syringae pv. syringae (strain B728a), this protein is Coenzyme PQQ synthesis protein A.